A 280-amino-acid polypeptide reads, in one-letter code: Tryptophan 2,3-dioxygenase (280 aa).

Residues 47–51, Tyr-109, and Arg-113 contribute to the substrate site; that span reads FVVQH. His-236 contributes to the heme binding site. Thr-250 contributes to the substrate binding site.

The protein belongs to the tryptophan 2,3-dioxygenase family. Homotetramer. Heme is required as a cofactor.

The enzyme catalyses L-tryptophan + O2 = N-formyl-L-kynurenine. The protein operates within amino-acid degradation; L-tryptophan degradation via kynurenine pathway; L-kynurenine from L-tryptophan: step 1/2. In terms of biological role, heme-dependent dioxygenase that catalyzes the oxidative cleavage of the L-tryptophan (L-Trp) pyrrole ring and converts L-tryptophan to N-formyl-L-kynurenine. Catalyzes the oxidative cleavage of the indole moiety. The protein is Tryptophan 2,3-dioxygenase of Serratia proteamaculans (strain 568).